Reading from the N-terminus, the 29-residue chain is Frontoxin VI (29 aa).

Cys-3 and Cys-24 are joined by a disulfide.

As to expression, expressed by the venom gland.

The protein localises to the secreted. Its function is as follows. Binds to muscle nicotinic acetylcholine receptor (nAChR) and inhibit acetylcholine from binding to the receptor, thereby impairing neuromuscular transmission. The sequence is that of Frontoxin VI from Micrurus frontalis (Coral snake).